The sequence spans 251 residues: Triosephosphate isomerase (251 aa).

Residue 9-11 (NWK) coordinates substrate. His95 (electrophile) is an active-site residue. Residue Glu167 is the Proton acceptor of the active site. Residues Gly173, Ser213, and 234–235 (GG) each bind substrate. Residue Ser213 is modified to Phosphoserine.

This sequence belongs to the triosephosphate isomerase family. As to quaternary structure, homodimer.

It localises to the cytoplasm. The enzyme catalyses D-glyceraldehyde 3-phosphate = dihydroxyacetone phosphate. It participates in carbohydrate biosynthesis; gluconeogenesis. The protein operates within carbohydrate degradation; glycolysis; D-glyceraldehyde 3-phosphate from glycerone phosphate: step 1/1. Its function is as follows. Involved in the gluconeogenesis. Catalyzes stereospecifically the conversion of dihydroxyacetone phosphate (DHAP) to D-glyceraldehyde-3-phosphate (G3P). This Bacillus anthracis protein is Triosephosphate isomerase.